A 391-amino-acid polypeptide reads, in one-letter code: Period circadian protein (391 aa).

Disordered stretches follow at residues 27-121 (VTAP…PPVT), 163-188 (MLEY…WEGE), 241-270 (GSSA…QFTQ), and 328-357 (SPSG…TSQA). Gly residues predominate over residues 93–114 (GTSGTGNSGDGGGGGGADGPGS). Positions 241 to 255 (GSSAGGNGSGTGNNN) are enriched in gly residues.

In terms of assembly, forms a heterodimer with timeless (TIM); the complex then translocates into the nucleus. Post-translationally, phosphorylated with a circadian rhythmicity, probably by the double-time protein (dbt). Phosphorylation could be implicated in the stability of per monomer and in the formation of heterodimer per-tim.

The protein resides in the nucleus. Its subcellular location is the cytoplasm. The protein localises to the perinuclear region. Its function is as follows. Essential for biological clock functions. Determines the period length of circadian and ultradian rhythms; an increase in PER dosage leads to shortened circadian rhythms and a decrease leads to lengthened circadian rhythms. Essential for the circadian rhythmicity of locomotor activity, eclosion behavior, and for the rhythmic component of the male courtship song that originates in the thoracic nervous system. The biological cycle depends on the rhythmic formation and nuclear localization of the TIM-PER complex. Light induces the degradation of TIM, which promotes elimination of PER. Nuclear activity of the heterodimer coordinatively regulates PER and TIM transcription through a negative feedback loop. Behaves as a negative element in circadian transcriptional loop. Does not appear to bind DNA, suggesting indirect transcriptional inhibition. In Drosophila insularis (Fruit fly), this protein is Period circadian protein (per).